We begin with the raw amino-acid sequence, 366 residues long: tRNA/tmRNA (uracil-C(5))-methyltransferase (366 aa).

Residues Gln190, Tyr218, Asn223, Glu239, and Asp299 each contribute to the S-adenosyl-L-methionine site. Cys324 functions as the Nucleophile in the catalytic mechanism. Glu358 acts as the Proton acceptor in catalysis.

It belongs to the class I-like SAM-binding methyltransferase superfamily. RNA M5U methyltransferase family. TrmA subfamily.

The catalysed reaction is uridine(54) in tRNA + S-adenosyl-L-methionine = 5-methyluridine(54) in tRNA + S-adenosyl-L-homocysteine + H(+). It catalyses the reaction uridine(341) in tmRNA + S-adenosyl-L-methionine = 5-methyluridine(341) in tmRNA + S-adenosyl-L-homocysteine + H(+). Functionally, dual-specificity methyltransferase that catalyzes the formation of 5-methyluridine at position 54 (m5U54) in all tRNAs, and that of position 341 (m5U341) in tmRNA (transfer-mRNA). The sequence is that of tRNA/tmRNA (uracil-C(5))-methyltransferase from Escherichia coli O127:H6 (strain E2348/69 / EPEC).